The sequence spans 124 residues: Superoxide reductase (124 aa).

6 residues coordinate Fe cation: Glu-14, His-16, His-41, His-47, Cys-111, and His-114.

This sequence belongs to the desulfoferrodoxin family. As to quaternary structure, homotetramer. It depends on Fe cation as a cofactor.

The enzyme catalyses reduced [rubredoxin] + superoxide + 2 H(+) = oxidized [rubredoxin] + H2O2. Its function is as follows. Uses electrons from reduced NADP, by way of rubredoxin and an oxidoreductase, to catalyze the reduction of superoxide to hydrogen peroxide. This Pyrococcus furiosus (strain ATCC 43587 / DSM 3638 / JCM 8422 / Vc1) protein is Superoxide reductase (sorA).